Reading from the N-terminus, the 237-residue chain is MAMFRSLVASAQQRQPPAGPAGGDSGLEAQYTCPICLEVYHRPVAIGSCGHTFCGECLQPCLQVPSPLCPLCRLPFDPKKVDKATHVEKQLSSYKAPCRGCNKKVTLAKMRVHISSCLKVQEQMANCPKFVPVVPTSQPIPSNIPNRSTFACPYCGARNLDQQELVKHCVESHRSDPNRVVCPICSAMPWGDPSYKSANFLQHLLHRHKFSYDTFVDYSIDEEAAFQAALALSLSEN.

The segment at 33–73 (CPICLEVYHRPVAIGSCGHTFCGECLQPCLQVPSPLCPLCR) adopts an RING-type zinc-finger fold. 4 residues coordinate Zn(2+): C98, C101, H113, and C117. Residues 98–117 (CRGCNKKVTLAKMRVHISSC) form a C2HC RNF-type zinc finger. One can recognise a UIM domain in the interval 221–237 (DEEAAFQAALALSLSEN).

Its subcellular location is the cytoplasm. The catalysed reaction is S-ubiquitinyl-[E2 ubiquitin-conjugating enzyme]-L-cysteine + [acceptor protein]-L-lysine = [E2 ubiquitin-conjugating enzyme]-L-cysteine + N(6)-ubiquitinyl-[acceptor protein]-L-lysine.. It participates in protein modification; protein ubiquitination. E3 ubiquitin-protein ligase that promotes the ubiquitination of different substrates. In turn, participates in different biological processes including interferon production or autophagy. Plays a role in the activation of RNA virus-induced interferon-beta production by promoting the ubiquitination of TRAF3 and TRAF6. Also plays a role in the early recruitment of autophagy adapters to bacteria. Mediates 'Lys-29' and 'Lys-33'-linked ubiquitination of SQSTM1 leading to xenophagic targeting of bacteria and inhibition of their replication. The chain is E3 ubiquitin-protein ligase RNF166 (RNF166) from Homo sapiens (Human).